A 635-amino-acid chain; its full sequence is 1-deoxy-D-xylulose-5-phosphate synthase (635 aa).

Residues His79 and 120 to 122 (GHS) each bind thiamine diphosphate. Residue Asp151 coordinates Mg(2+). Residues 152–153 (GA), Asn182, Tyr291, and Glu372 each bind thiamine diphosphate. Asn182 lines the Mg(2+) pocket.

Belongs to the transketolase family. DXPS subfamily. Homodimer. Mg(2+) is required as a cofactor. Requires thiamine diphosphate as cofactor.

The enzyme catalyses D-glyceraldehyde 3-phosphate + pyruvate + H(+) = 1-deoxy-D-xylulose 5-phosphate + CO2. It participates in metabolic intermediate biosynthesis; 1-deoxy-D-xylulose 5-phosphate biosynthesis; 1-deoxy-D-xylulose 5-phosphate from D-glyceraldehyde 3-phosphate and pyruvate: step 1/1. Functionally, catalyzes the acyloin condensation reaction between C atoms 2 and 3 of pyruvate and glyceraldehyde 3-phosphate to yield 1-deoxy-D-xylulose-5-phosphate (DXP). This chain is 1-deoxy-D-xylulose-5-phosphate synthase, found in Xylella fastidiosa (strain M12).